Consider the following 195-residue polypeptide: E3 ubiquitin-protein ligase ZNRF1 (195 aa).

Over residues 1–10 (MGGKQSSASR) the composition is skewed to polar residues. Disordered stretches follow at residues 1–36 (MGGK…HFRA) and 61–84 (PFGL…DSRG). G2 carries N-myristoyl glycine lipidation. Positions 18 to 29 (VSSDDSAVPPSS) are enriched in low complexity. Residues 152-193 (CVICLEELSQGDTIARLPCLCIYHKSCIDSWFEVNRCCPEHP) form an RING-type; atypical zinc finger.

It localises to the endosome. It is found in the lysosome. Its subcellular location is the membrane. It carries out the reaction S-ubiquitinyl-[E2 ubiquitin-conjugating enzyme]-L-cysteine + [acceptor protein]-L-lysine = [E2 ubiquitin-conjugating enzyme]-L-cysteine + N(6)-ubiquitinyl-[acceptor protein]-L-lysine.. It functions in the pathway protein modification; protein ubiquitination. Its function is as follows. E3 ubiquitin-protein ligase that plays a role in neuron cells differentiation. Plays a role in the establishment and maintenance of neuronal transmission and plasticity. The protein is E3 ubiquitin-protein ligase ZNRF1 (znrf1) of Xenopus tropicalis (Western clawed frog).